The chain runs to 232 residues: Uracil-DNA glycosylase (232 aa).

The Proton acceptor role is filled by aspartate 64.

This sequence belongs to the uracil-DNA glycosylase (UDG) superfamily. UNG family.

It is found in the cytoplasm. The catalysed reaction is Hydrolyzes single-stranded DNA or mismatched double-stranded DNA and polynucleotides, releasing free uracil.. Functionally, excises uracil residues from the DNA which can arise as a result of misincorporation of dUMP residues by DNA polymerase or due to deamination of cytosine. This Shouchella clausii (strain KSM-K16) (Alkalihalobacillus clausii) protein is Uracil-DNA glycosylase.